Reading from the N-terminus, the 217-residue chain is Thymidylate kinase (217 aa).

Residue 7–14 (GIEGTGKT) coordinates ATP.

The protein belongs to the thymidylate kinase family.

The enzyme catalyses dTMP + ATP = dTDP + ADP. Phosphorylation of dTMP to form dTDP in both de novo and salvage pathways of dTTP synthesis. This is Thymidylate kinase from Maridesulfovibrio salexigens (strain ATCC 14822 / DSM 2638 / NCIMB 8403 / VKM B-1763) (Desulfovibrio salexigens).